We begin with the raw amino-acid sequence, 1035 residues long: Probable LRR receptor-like serine/threonine-protein kinase At1g53440 (1035 aa).

A signal peptide spans 1 to 26; the sequence is MGFFFSTRKGLLLIIFICLDIFGSNA. The Extracellular segment spans residues 27–607; that stretch reads QLLPEDEVQT…VDTGKPLSNG (581 aa). 4 N-linked (GlcNAc...) asparagine glycosylation sites follow: N46, N75, N83, and N110. LRR repeat units follow at residues 87–110, 111–135, 137–158, 160–182, 183–206, 208–232, and 234–254; these read VCRV…EFGN, LTRL…LSQI, LEIL…LGQI, TLTD…LGNL, RSLK…LSNL, NLTN…NWTR, and VRLD…ISNL. Residues N194, N208, and N229 are each glycosylated (N-linked (GlcNAc...) asparagine). 2 N-linked (GlcNAc...) asparagine glycosylation sites follow: N256 and N277. LRR repeat units lie at residues 278–302, 303–326, 328–349, and 350–372; these read MTNM…IGTS, MTML…TFRS, NAFN…QFIL, and DSKQ…SCNQ. N-linked (GlcNAc...) asparagine glycosylation is found at N317, N337, N361, N386, N469, and N559. The helical transmembrane segment at 608–628 threads the bilayer; that stretch reads VVAGIVIAACVAFGLLVLVIL. The Cytoplasmic segment spans residues 629–1035; it reads RLTGYLGGKE…LDDLTDVEIE (407 aa). T656 is modified (phosphothreonine). A Protein kinase domain is found at 667-948; it reads FDPENKIGEG…QGKIKVQPPL (282 aa). ATP-binding positions include 673 to 681 and K695; that span reads IGEGGFGPV. Y740 is subject to Phosphotyrosine. D793 serves as the catalytic Proton acceptor. S826 carries the post-translational modification Phosphoserine. T827 and T832 each carry phosphothreonine. Phosphotyrosine is present on Y840. Residues 969-1035 are disordered; sequence LSQDSESQVS…LDDLTDVEIE (67 aa). Residues 972 to 981 show a composition bias toward polar residues; that stretch reads DSESQVSTYT. Residues 1009–1023 are compositionally biased toward low complexity; sequence SLLQQEEGNSSSSSR.

This sequence belongs to the protein kinase superfamily. Ser/Thr protein kinase family.

Its subcellular location is the cell membrane. It catalyses the reaction L-seryl-[protein] + ATP = O-phospho-L-seryl-[protein] + ADP + H(+). The enzyme catalyses L-threonyl-[protein] + ATP = O-phospho-L-threonyl-[protein] + ADP + H(+). The polypeptide is Probable LRR receptor-like serine/threonine-protein kinase At1g53440 (Arabidopsis thaliana (Mouse-ear cress)).